A 463-amino-acid polypeptide reads, in one-letter code: ATP synthase subunit beta (463 aa).

Residue 151 to 158 participates in ATP binding; sequence GGAGVGKT.

This sequence belongs to the ATPase alpha/beta chains family. In terms of assembly, F-type ATPases have 2 components, CF(1) - the catalytic core - and CF(0) - the membrane proton channel. CF(1) has five subunits: alpha(3), beta(3), gamma(1), delta(1), epsilon(1). CF(0) has three main subunits: a(1), b(2) and c(9-12). The alpha and beta chains form an alternating ring which encloses part of the gamma chain. CF(1) is attached to CF(0) by a central stalk formed by the gamma and epsilon chains, while a peripheral stalk is formed by the delta and b chains.

Its subcellular location is the cell membrane. The catalysed reaction is ATP + H2O + 4 H(+)(in) = ADP + phosphate + 5 H(+)(out). Functionally, produces ATP from ADP in the presence of a proton gradient across the membrane. The catalytic sites are hosted primarily by the beta subunits. In Clostridium botulinum (strain Okra / Type B1), this protein is ATP synthase subunit beta.